A 527-amino-acid polypeptide reads, in one-letter code: 4-alpha-glucanotransferase (527 aa).

The protein belongs to the disproportionating enzyme family.

It localises to the cytoplasm. The catalysed reaction is Transfers a segment of a (1-&gt;4)-alpha-D-glucan to a new position in an acceptor, which may be glucose or a (1-&gt;4)-alpha-D-glucan.. This Chlamydia trachomatis serovar D (strain ATCC VR-885 / DSM 19411 / UW-3/Cx) protein is 4-alpha-glucanotransferase (malQ).